We begin with the raw amino-acid sequence, 102 residues long: UPF0251 protein ASA_1331 (102 aa).

This sequence belongs to the UPF0251 family.

The chain is UPF0251 protein ASA_1331 from Aeromonas salmonicida (strain A449).